The chain runs to 150 residues: Ribonuclease H (150 aa).

The region spanning 1–141 is the RNase H type-1 domain; it reads MKSIEVHTDG…VDVLARNQAT (141 aa). Mg(2+) contacts are provided by aspartate 9, glutamate 47, aspartate 69, and aspartate 133.

It belongs to the RNase H family. Monomer. Requires Mg(2+) as cofactor.

It is found in the cytoplasm. The catalysed reaction is Endonucleolytic cleavage to 5'-phosphomonoester.. Endonuclease that specifically degrades the RNA of RNA-DNA hybrids. The polypeptide is Ribonuclease H (Xanthomonas oryzae pv. oryzae (strain MAFF 311018)).